The following is a 3661-amino-acid chain: Serine/threonine-protein kinase SMG1 (3661 aa).

Over residues 1–11 (MSRRAPGSRLS) the composition is skewed to low complexity. 2 disordered regions span residues 1-101 (MSRR…TYGR) and 116-144 (PEFTSVQHGSRALATKDMRKSQERSMSYS). An interaction with SMG8 and SMG9 region spans residues 1–1977 (MSRRAPGSRL…GVLLQQHMYV (1977 aa)). A compositionally biased stretch (polar residues) spans 26–35 (NDWQPRTDSA). Basic and acidic residues-rich tracts occupy residues 69 to 86 (QRHDDTRVHADIQNDEKG) and 129 to 138 (ATKDMRKSQE). An N6-acetyllysine modification is found at Lys173. Residues 1154 to 1165 (RNSASPKHSLNG) show a composition bias toward polar residues. Residues 1154 to 1175 (RNSASPKHSLNGESRKTVLSKP) form a disordered region. In terms of domain architecture, FAT spans 1283-1866 (RELQKSIEVQ…LYPAIVGTIS (584 aa)). One copy of the HEAT repeat lies at 1817 to 1852 (APWRGIIPQLFSRLNHPEVYVRQSICNLLCRVAQDS). The interval 1898-1919 (ECEGGSPPASQDSNKDEPKSGL) is disordered. The PI3K/PI4K catalytic domain maps to 2124 to 2463 (VGGTITILPT…MEREITRSLF (340 aa)). The tract at residues 2130–2136 (ILPTKTK) is G-loop. Positions 2332–2340 (GLGDRHLDN) are catalytic loop. The interval 2352-2376 (HIDYNVCFEKGKSLRVPEKVPFRMT) is activation loop. At Thr3550 the chain carries Phosphothreonine. A phosphoserine mark is found at Ser3556 and Ser3570. Polar residues predominate over residues 3568-3579 (ATSADTPPSTVP). Residues 3568–3591 (ATSADTPPSTVPGTGKSVACSPKK) form a disordered region. Residues Thr3573 and Thr3577 each carry the phosphothreonine modification. An FATC domain is found at 3629–3661 (RRMSVAEQVDYVIKEATNLDNLAQLYEGWTAWV).

The protein belongs to the PI3/PI4-kinase family. Component of the SMG1C complex composed of SMG1, SMG8 and SMG9; the recruitment of SMG8 to SMG1 N-terminus induces a large conformational change in the SMG1 C-terminal head domain containing the catalytic domain. Component of the transient SURF (SMG1-UPF1-eRF1-eRF3) complex. Part of a complex composed of SMG1, DHX34 and UPF1; within the complex DHX34 acts as a scaffolding protein to facilitate SMG1 phosphorylation of UPF1. Interacts with PRKCI. Interacts with TELO2 and TTI1. Interacts with RUVBL1 and RUVBL2. Interacts with UPF2. Interacts with DHX34 (via C-terminus); the interaction is RNA-independent. It depends on Mn(2+) as a cofactor. Post-translationally, autophosphorylated. As to expression, widely expressed, with highest level in heart and skeletal muscle. Expressed in placenta, brain, lung and spleen, but not in liver.

It localises to the nucleus. The protein resides in the cytoplasm. The enzyme catalyses L-seryl-[protein] + ATP = O-phospho-L-seryl-[protein] + ADP + H(+). It carries out the reaction L-threonyl-[protein] + ATP = O-phospho-L-threonyl-[protein] + ADP + H(+). Its activity is regulated as follows. Inhibited by caffeine, LY294002 and wortmannin. Serine/threonine protein kinase involved in both mRNA surveillance and genotoxic stress response pathways. Recognizes the substrate consensus sequence [ST]-Q. Plays a central role in nonsense-mediated decay (NMD) of mRNAs containing premature stop codons by phosphorylating UPF1/RENT1. Recruited by release factors to stalled ribosomes together with SMG8 and SMG9 (forming the SMG1C protein kinase complex), and UPF1 to form the transient SURF (SMG1-UPF1-eRF1-eRF3) complex. In EJC-dependent NMD, the SURF complex associates with the exon junction complex (EJC) through UPF2 and allows the formation of an UPF1-UPF2-UPF3 surveillance complex which is believed to activate NMD. Also acts as a genotoxic stress-activated protein kinase that displays some functional overlap with ATM. Can phosphorylate p53/TP53 and is required for optimal p53/TP53 activation after cellular exposure to genotoxic stress. Its depletion leads to spontaneous DNA damage and increased sensitivity to ionizing radiation (IR). May activate PRKCI but not PRKCZ. The sequence is that of Serine/threonine-protein kinase SMG1 from Homo sapiens (Human).